Here is a 143-residue protein sequence, read N- to C-terminus: Nucleoside diphosphate kinase (143 aa).

ATP-binding residues include Lys-11, Phe-59, Arg-87, Thr-93, Arg-104, and Asn-114. Residue His-117 is the Pros-phosphohistidine intermediate of the active site.

It belongs to the NDK family. In terms of assembly, homotetramer. The cofactor is Mg(2+).

It localises to the cytoplasm. It carries out the reaction a 2'-deoxyribonucleoside 5'-diphosphate + ATP = a 2'-deoxyribonucleoside 5'-triphosphate + ADP. It catalyses the reaction a ribonucleoside 5'-diphosphate + ATP = a ribonucleoside 5'-triphosphate + ADP. In terms of biological role, major role in the synthesis of nucleoside triphosphates other than ATP. The ATP gamma phosphate is transferred to the NDP beta phosphate via a ping-pong mechanism, using a phosphorylated active-site intermediate. This chain is Nucleoside diphosphate kinase, found in Escherichia coli O81 (strain ED1a).